We begin with the raw amino-acid sequence, 481 residues long: CASP8 and FADD-like apoptosis regulator (481 aa).

2 DED domains span residues 6-78 (VSAE…RILK) and 97-172 (DYRV…LNTK). Positions 6–200 (VSAEVIHQVE…QASLPKLSIK (195 aa)) are interaction with CASP8. The interval 6 to 229 (VSAEVIHQVE…DSQRTLVKTS (224 aa)) is interaction with FADD. Residues 6 to 307 (VSAEVIHQVE…YASMAQHQDY (302 aa)) are interaction with CASP8 propeptide. The interaction with CASP3 stretch occupies residues 197–436 (LSIKYNSRLQ…KLSQQLKQGR (240 aa)). Residues 197–481 (LSIKYNSRLQ…LRKKLILAPT (285 aa)) form an interaction with TRAF1 and TRAF2 region. An interaction with CASP8 subunits p18 and p10 region spans residues 219–481 (RDSQRTLVKT…LRKKLILAPT (263 aa)). The segment at 265–360 (DTKYLQETFT…RGKPKLFFIQ (96 aa)) is caspase. The interval 372–481 (SSLEVDGPSI…LRKKLILAPT (110 aa)) is interaction with CASP8.

It belongs to the peptidase C14A family. As to quaternary structure, TNFRSF6 stimulation triggers recruitment to the death-inducing signaling complex (DISC) formed by TNFRSF6, FADD and CASP8. A proteolytic fragment (p43) stays associated with the DISC. Interacts with RIPK1. Proteolytically processed by CASP8 generating subunits p43 and p12. As to expression, highly expressed in heart.

Functionally, apoptosis regulator protein which may function as a crucial link between cell survival and cell death pathways in mammalian cells. Acts as an inhibitor of TNFRSF6 mediated apoptosis. A proteolytic fragment (p43) is likely retained in the death-inducing signaling complex (DISC) thereby blocking further recruitment and processing of caspase-8 at the complex. Full length and shorter isoforms have been shown either to induce apoptosis or to reduce TNFRSF-triggered apoptosis. Lacks enzymatic (caspase) activity. This Mus musculus (Mouse) protein is CASP8 and FADD-like apoptosis regulator (Cflar).